Here is a 250-residue protein sequence, read N- to C-terminus: MKLGLLCALLSLLAGHGWADTRAIGAEECRPNSQPWQAGLFHLTRLFCGATLISDRWLLTAAHCRKPYLWVRLGEHHLWKWEGPEQLFRVTDFFPHPGFNKDLSANDHNDDIMLIRLPRQARLSPAVQPLNLSQTCVSPGMQCLISGWGAVSSPKALFPVTLQCANISILENKLCHWAYPGHISDSMLCAGLWEGGRGSCQGDSGGPLVCNGTLAGVVSGGAEPCSRPRRPAVYTSVCHYLDWIQEIMEN.

The signal sequence occupies residues 1–15; that stretch reads MKLGLLCALLSLLAG. The Peptidase S1 domain occupies 23–249; sequence AIGAEECRPN…YLDWIQEIME (227 aa). Disulfide bonds link Cys-29–Cys-164, Cys-48–Cys-64, Cys-136–Cys-238, Cys-143–Cys-210, Cys-175–Cys-189, and Cys-200–Cys-225. Catalysis depends on charge relay system residues His-63 and Asp-111. Asn-131 and Asn-166 each carry an N-linked (GlcNAc...) asparagine glycan. Residue Ser-204 is the Charge relay system of the active site. N-linked (GlcNAc...) asparagine glycosylation is present at Asn-211.

It belongs to the peptidase S1 family. Kallikrein subfamily. In terms of tissue distribution, skin, thymus, trachea, cerebellum and spinal cord.

The protein resides in the secreted. The sequence is that of Kallikrein-9 (KLK9) from Homo sapiens (Human).